The following is a 104-amino-acid chain: L-rhamnose mutarotase (104 aa).

Tyr-18 contributes to the substrate binding site. His-22 (proton donor) is an active-site residue. Residues Tyr-41 and 76–77 each bind substrate; that span reads WW.

This sequence belongs to the rhamnose mutarotase family. As to quaternary structure, homodimer.

Its subcellular location is the cytoplasm. The catalysed reaction is alpha-L-rhamnose = beta-L-rhamnose. Its pathway is carbohydrate metabolism; L-rhamnose metabolism. Involved in the anomeric conversion of L-rhamnose. The chain is L-rhamnose mutarotase from Lachnoclostridium phytofermentans (strain ATCC 700394 / DSM 18823 / ISDg) (Clostridium phytofermentans).